The sequence spans 244 residues: Probable transcriptional regulatory protein CHAB381_1426 (244 aa).

This sequence belongs to the TACO1 family.

It localises to the cytoplasm. This Campylobacter hominis (strain ATCC BAA-381 / DSM 21671 / CCUG 45161 / LMG 19568 / NCTC 13146 / CH001A) protein is Probable transcriptional regulatory protein CHAB381_1426.